A 170-amino-acid chain; its full sequence is Protein Rex (170 aa).

Residues 1–16 (MPKTRRQRTRRARRNR) are compositionally biased toward basic residues. Disordered regions lie at residues 1–27 (MPKT…SQDL) and 69–170 (VQST…GEKP). A Nuclear localization signal, and RNA-binding (RxRE) motif is present at residues 2 to 19 (PKTRRQRTRRARRNRPPT). The tract at residues 57 to 71 (PPAYIDMPSWPPVQS) is homomultimerization. Residues 82 to 95 (ALSALLSNTLSLAS) are compositionally biased toward low complexity. The Nuclear export signal signature appears at 83–94 (LSALLSNTLSLA). A homomultimerization region spans residues 124-132 (PSFNQCEST). Residues 143–160 (PSGISSPPSPSPNLASVP) are compositionally biased toward low complexity. Phosphoserine; by host is present on residues Ser151 and Ser153. A compositionally biased stretch (polar residues) spans 161–170 (KTSTPPGEKP).

Belongs to the deltaretrovirus Rex protein family. As to quaternary structure, homomultimer. In terms of processing, phosphorylation is essential for RNA-binding and function.

It localises to the host nucleus. It is found in the host nucleolus. The protein resides in the host cytoplasm. Functionally, rex escorts unspliced gag-pro-pol and singly spliced env mRNAs out of the nucleus of infected cells. These mRNAs carry a recognition sequence called Rex responsive element (RxRE or XRE) located at the 3' region of the long terminal repeat (LTR). This function is essential since most HTLV proteins are translated from unspliced or partially spliced pre-mRNAs that cannot exit the nucleus by the pathway used by fully processed cellular mRNAs. This Human T-cell leukemia virus 2 (HTLV-2) protein is Protein Rex.